The following is a 37-amino-acid chain: Cytochrome b6-f complex subunit 5 (37 aa).

Residues 5–25 traverse the membrane as a helical segment; it reads LLSGIVLGMIPITLAGLFVTA.

It belongs to the PetG family. The 4 large subunits of the cytochrome b6-f complex are cytochrome b6, subunit IV (17 kDa polypeptide, PetD), cytochrome f and the Rieske protein, while the 4 small subunits are PetG, PetL, PetM and PetN. The complex functions as a dimer.

It is found in the plastid. The protein localises to the chloroplast thylakoid membrane. Functionally, component of the cytochrome b6-f complex, which mediates electron transfer between photosystem II (PSII) and photosystem I (PSI), cyclic electron flow around PSI, and state transitions. PetG is required for either the stability or assembly of the cytochrome b6-f complex. The chain is Cytochrome b6-f complex subunit 5 from Mesostigma viride (Green alga).